A 247-amino-acid polypeptide reads, in one-letter code: L-cystine import ATP-binding protein TcyC (247 aa).

The ABC transporter domain occupies 2–240 (LTVKGLNKSF…PKEERTQRFL (239 aa)). An ATP-binding site is contributed by 34–41 (GPSGSGKT).

This sequence belongs to the ABC transporter superfamily. L-cystine importer (TC 3.A.1.3.14) family. As to quaternary structure, the complex is composed of two ATP-binding proteins (TcyC), two transmembrane proteins (TcyB) and a solute-binding protein (TcyA).

It is found in the cell membrane. Functionally, part of the ABC transporter complex TcyABC involved in L-cystine import. Responsible for energy coupling to the transport system. The sequence is that of L-cystine import ATP-binding protein TcyC (tcyC) from Bacillus subtilis (strain 168).